The sequence spans 935 residues: Protocadherin gamma-A11 (935 aa).

The signal sequence occupies residues 1 to 29 (MANRLQRGDRSRLLLLLCIFLGTLRGFRA). Cadherin domains follow at residues 30–134 (RQIR…APSF), 135–243 (QEDE…IPMF), 244–348 (TQSV…APEI), 349–453 (TITS…PPVF), 454–563 (PHSS…APEI), and 571–677 (DGST…ADLG). The Extracellular segment spans residues 30 to 693 (RQIRYSVPEE…NSEASDLSLY (664 aa)). An N-linked (GlcNAc...) asparagine glycan is attached at N48. N255, N266, N420, and N546 each carry an N-linked (GlcNAc...) asparagine glycan. The chain crosses the membrane as a helical span at residues 694-714 (LVVAVAAVSCIFLVFVIVLLA). The Cytoplasmic segment spans residues 715-935 (LRLWRWHKSR…KKKSGKKEKK (221 aa)). Disordered stretches follow at residues 805 to 844 (CDPTSNQQAPPNTDWRFSQAQRPGTSGSQNGDDTGTWPNN) and 905 to 935 (ATLTNAAGKRDGKAPAGGNGNKKKSGKKEKK). The span at 807–844 (PTSNQQAPPNTDWRFSQAQRPGTSGSQNGDDTGTWPNN) shows a compositional bias: polar residues. Residues 925-935 (NKKKSGKKEKK) are compositionally biased toward basic residues.

Its subcellular location is the cell membrane. In terms of biological role, potential calcium-dependent cell-adhesion protein. May be involved in the establishment and maintenance of specific neuronal connections in the brain. In Pan troglodytes (Chimpanzee), this protein is Protocadherin gamma-A11 (PCDHGA11).